A 167-amino-acid polypeptide reads, in one-letter code: Translationally-controlled tumor protein homolog (167 aa).

The 167-residue stretch at 1-167 (MLIYQDVLTG…WKDGLKEIKI (167 aa)) folds into the TCTP domain.

This sequence belongs to the TCTP family.

The protein resides in the cytoplasm. It is found in the cytoskeleton. Involved in protein synthesis. Involved in microtubule stabilization. The polypeptide is Translationally-controlled tumor protein homolog (Cryptococcus neoformans var. neoformans serotype D (strain B-3501A) (Filobasidiella neoformans)).